The chain runs to 403 residues: Phosphopentomutase (403 aa).

Mn(2+)-binding residues include D13, D298, H303, D339, H340, and H351.

It belongs to the phosphopentomutase family. Mn(2+) serves as cofactor.

Its subcellular location is the cytoplasm. The catalysed reaction is 2-deoxy-alpha-D-ribose 1-phosphate = 2-deoxy-D-ribose 5-phosphate. It carries out the reaction alpha-D-ribose 1-phosphate = D-ribose 5-phosphate. It participates in carbohydrate degradation; 2-deoxy-D-ribose 1-phosphate degradation; D-glyceraldehyde 3-phosphate and acetaldehyde from 2-deoxy-alpha-D-ribose 1-phosphate: step 1/2. Functionally, isomerase that catalyzes the conversion of deoxy-ribose 1-phosphate (dRib-1-P) and ribose 1-phosphate (Rib-1-P) to deoxy-ribose 5-phosphate (dRib-5-P) and ribose 5-phosphate (Rib-5-P), respectively. This is Phosphopentomutase from Streptococcus pyogenes serotype M5 (strain Manfredo).